A 376-amino-acid chain; its full sequence is Putative glutamate--cysteine ligase 2 (376 aa).

This sequence belongs to the glutamate--cysteine ligase type 2 family. YbdK subfamily.

The enzyme catalyses L-cysteine + L-glutamate + ATP = gamma-L-glutamyl-L-cysteine + ADP + phosphate + H(+). In terms of biological role, ATP-dependent carboxylate-amine ligase which exhibits weak glutamate--cysteine ligase activity. This chain is Putative glutamate--cysteine ligase 2, found in Paracoccus denitrificans (strain Pd 1222).